Reading from the N-terminus, the 407-residue chain is MAYQEPNKDGFYGKFGGRFVPETLMTAVLELEKAYRESQADPSFQEELNQLLRQYVGRETPLYYAKNLTQHIGGAKIYLKREDLNHTGAHKINNALGQVWLAKRMGKKKIIAETGAGQHGVATATAAALFNMECTIYMGEEDVKRQALNVFRMELLGAKVEAVTDGSRVLKDAVNAALRSWVANIDDTHYILGSALGPHPFPEIVRDFQSVIGREAKQQYRDLTGRDLPDALVACVGGGSNAIGLFHPFVEDESVAMYGTEAAGLGVDTEHHAATLTKGRPGVLHGSLMDVLQDAHGQILEAFSISAGLDYPGIGPEHSHYHDIKRASYVPVTDEEALEGFQLLSRVEGIIPALESSHAIAFAVKLAKELGPEKSMIVCLSGRGDKDVVQVKDRLEADAAKKGEAHA.

Lysine 91 carries the N6-(pyridoxal phosphate)lysine modification.

It belongs to the TrpB family. In terms of assembly, tetramer of two alpha and two beta chains. Requires pyridoxal 5'-phosphate as cofactor.

The catalysed reaction is (1S,2R)-1-C-(indol-3-yl)glycerol 3-phosphate + L-serine = D-glyceraldehyde 3-phosphate + L-tryptophan + H2O. It participates in amino-acid biosynthesis; L-tryptophan biosynthesis; L-tryptophan from chorismate: step 5/5. Functionally, the beta subunit is responsible for the synthesis of L-tryptophan from indole and L-serine. The chain is Tryptophan synthase beta chain from Streptococcus pneumoniae (strain 70585).